The primary structure comprises 849 residues: Protein translocase subunit SecA (849 aa).

ATP is bound by residues glutamine 85, 103 to 107, and aspartate 493; that span reads GEGKT. 4 residues coordinate Zn(2+): cysteine 832, cysteine 834, cysteine 843, and histidine 844.

Belongs to the SecA family. Monomer and homodimer. Part of the essential Sec protein translocation apparatus which comprises SecA, SecYEG and auxiliary proteins SecDF. Other proteins may also be involved. Requires Zn(2+) as cofactor.

It is found in the cell membrane. The protein localises to the cytoplasm. It catalyses the reaction ATP + H2O + cellular proteinSide 1 = ADP + phosphate + cellular proteinSide 2.. Its function is as follows. Part of the Sec protein translocase complex. Interacts with the SecYEG preprotein conducting channel. Has a central role in coupling the hydrolysis of ATP to the transfer of proteins into and across the cell membrane, serving as an ATP-driven molecular motor driving the stepwise translocation of polypeptide chains across the membrane. This chain is Protein translocase subunit SecA, found in Streptococcus thermophilus (strain ATCC BAA-250 / LMG 18311).